The primary structure comprises 140 residues: MTEYQASERRGCRIMGISRSLLHYCPNTARDIPVVEVLQKLAHQYPAYGFGLMFNKLRQSGLPWNVKRVYRVYRLLKLNFRRKGKKRLPNRHPQPLAIPLKMNHCWSVDFMSDALPDGRRFRLFNVVEILTGKHWQLKLT.

This chain is Low calcium response locus protein T (lcrT), found in Yersinia pseudotuberculosis serotype I (strain IP32953).